The chain runs to 179 residues: Large ribosomal subunit protein uL5 (179 aa).

The protein belongs to the universal ribosomal protein uL5 family. Part of the 50S ribosomal subunit; part of the 5S rRNA/L5/L18/L25 subcomplex. Contacts the 5S rRNA and the P site tRNA. Forms a bridge to the 30S subunit in the 70S ribosome.

Its function is as follows. This is one of the proteins that bind and probably mediate the attachment of the 5S RNA into the large ribosomal subunit, where it forms part of the central protuberance. In the 70S ribosome it contacts protein S13 of the 30S subunit (bridge B1b), connecting the 2 subunits; this bridge is implicated in subunit movement. Contacts the P site tRNA; the 5S rRNA and some of its associated proteins might help stabilize positioning of ribosome-bound tRNAs. This chain is Large ribosomal subunit protein uL5, found in Shewanella woodyi (strain ATCC 51908 / MS32).